Consider the following 260-residue polypeptide: Small ribosomal subunit protein eS4 (260 aa).

The region spanning 46–111 (VPLLILVRDM…RYRVVMNEHH (66 aa)) is the S4 RNA-binding domain.

The protein belongs to the eukaryotic ribosomal protein eS4 family.

This is Small ribosomal subunit protein eS4 from Methanopyrus kandleri (strain AV19 / DSM 6324 / JCM 9639 / NBRC 100938).